The sequence spans 122 residues: Putative iron-sulfur cluster insertion protein ErpA (122 aa).

Iron-sulfur cluster is bound by residues Cys50, Cys114, and Cys116.

Belongs to the HesB/IscA family. In terms of assembly, homodimer. Iron-sulfur cluster is required as a cofactor.

Required for insertion of 4Fe-4S clusters. This Burkholderia mallei (strain NCTC 10247) protein is Putative iron-sulfur cluster insertion protein ErpA.